The chain runs to 87 residues: uncharacterized protein (87 aa).

The protein belongs to the YlmC/YmxH family.

This is an uncharacterized protein from Clostridium acetobutylicum (strain ATCC 824 / DSM 792 / JCM 1419 / IAM 19013 / LMG 5710 / NBRC 13948 / NRRL B-527 / VKM B-1787 / 2291 / W).